A 123-amino-acid chain; its full sequence is Large ribosomal subunit protein bL12 (123 aa).

Belongs to the bacterial ribosomal protein bL12 family. In terms of assembly, homodimer. Part of the ribosomal stalk of the 50S ribosomal subunit. Forms a multimeric L10(L12)X complex, where L10 forms an elongated spine to which 2 to 4 L12 dimers bind in a sequential fashion. Binds GTP-bound translation factors.

Functionally, forms part of the ribosomal stalk which helps the ribosome interact with GTP-bound translation factors. Is thus essential for accurate translation. The protein is Large ribosomal subunit protein bL12 of Dechloromonas aromatica (strain RCB).